Reading from the N-terminus, the 478-residue chain is Aspartyl/glutamyl-tRNA(Asn/Gln) amidotransferase subunit B (478 aa).

Belongs to the GatB/GatE family. GatB subfamily. In terms of assembly, heterotrimer of A, B and C subunits.

It carries out the reaction L-glutamyl-tRNA(Gln) + L-glutamine + ATP + H2O = L-glutaminyl-tRNA(Gln) + L-glutamate + ADP + phosphate + H(+). The catalysed reaction is L-aspartyl-tRNA(Asn) + L-glutamine + ATP + H2O = L-asparaginyl-tRNA(Asn) + L-glutamate + ADP + phosphate + 2 H(+). In terms of biological role, allows the formation of correctly charged Asn-tRNA(Asn) or Gln-tRNA(Gln) through the transamidation of misacylated Asp-tRNA(Asn) or Glu-tRNA(Gln) in organisms which lack either or both of asparaginyl-tRNA or glutaminyl-tRNA synthetases. The reaction takes place in the presence of glutamine and ATP through an activated phospho-Asp-tRNA(Asn) or phospho-Glu-tRNA(Gln). In Alkalilimnicola ehrlichii (strain ATCC BAA-1101 / DSM 17681 / MLHE-1), this protein is Aspartyl/glutamyl-tRNA(Asn/Gln) amidotransferase subunit B.